Consider the following 155-residue polypeptide: Microsomal glutathione S-transferase 1 (155 aa).

The Lumenal segment spans residues 3–9; it reads DLKQLMD. The helical transmembrane segment at 10-33 threads the bilayer; that stretch reads NEVLMAFTSYATIILAKMMFLSSA. Topologically, residues 34 to 62 are cytoplasmic; the sequence is TAFQRLTNKVFANPEDCAGFGKGENAKKF. Residue arginine 38 participates in glutathione binding. Residues lysine 42, lysine 55, and lysine 60 each carry the N6-acetyllysine modification. The chain crosses the membrane as a helical span at residues 63–96; sequence LRTDEKVERVRRAHLNDLENIVPFLGIGLLYSLS. Residues arginine 73, arginine 74, histidine 76, and glutamate 81 each contribute to the glutathione site. Tyrosine 93 carries the post-translational modification 3'-nitrotyrosine; in vitro. Residues 97–99 are Lumenal-facing; the sequence is GPD. The helical transmembrane segment at 100–123 threads the bilayer; it reads LSTALIHFRIFVGARIYHTIAYLT. Tyrosine 121 is a glutathione binding site. At 124–128 the chain is on the cytoplasmic side; sequence PLPQP. The helical transmembrane segment at 129–148 threads the bilayer; that stretch reads NRGLAFFVGYGVTLSMAYRL. At 149–155 the chain is on the lumenal side; sequence LRSRLYL.

The protein belongs to the MAPEG family. In terms of assembly, homotrimer; The trimer binds only one molecule of glutathione. Post-translationally, in vitro, peroxynitrite induces nitration at Tyr-93 which activates the enzyme. As to expression, highest in the liver, followed by kidney and testis and much lower in seminal vesicles, spleen, lung and brain.

The protein localises to the endoplasmic reticulum membrane. The protein resides in the mitochondrion outer membrane. It catalyses the reaction RX + glutathione = an S-substituted glutathione + a halide anion + H(+). In vitro, can be activated by reagents that attack Cys-50 sulfhydryl, such as N-ethylmaleimide and via nitration of Tyr-93 by peroxynitrite. Conjugation of reduced glutathione to a wide number of exogenous and endogenous hydrophobic electrophiles. The chain is Microsomal glutathione S-transferase 1 (Mgst1) from Rattus norvegicus (Rat).